A 484-amino-acid polypeptide reads, in one-letter code: Siroheme synthase 1 (484 aa).

The tract at residues 1-205 (MHHYPIFLKL…GREAEGEAEL (205 aa)) is precorrin-2 dehydrogenase /sirohydrochlorin ferrochelatase. NAD(+) contacts are provided by residues 22–23 (EA) and 43–44 (PV). Serine 130 carries the post-translational modification Phosphoserine. Positions 220–484 (GEVFLVGAGP…DPCWTGGMRD (265 aa)) are uroporphyrinogen-III C-methyltransferase. Proline 229 is a binding site for S-adenosyl-L-methionine. Aspartate 252 acts as the Proton acceptor in catalysis. Catalysis depends on lysine 274, which acts as the Proton donor. S-adenosyl-L-methionine is bound by residues 305–307 (GGD), leucine 310, 335–336 (SA), methionine 387, and alanine 416.

The protein in the N-terminal section; belongs to the precorrin-2 dehydrogenase / sirohydrochlorin ferrochelatase family. This sequence in the C-terminal section; belongs to the precorrin methyltransferase family.

The catalysed reaction is uroporphyrinogen III + 2 S-adenosyl-L-methionine = precorrin-2 + 2 S-adenosyl-L-homocysteine + H(+). It catalyses the reaction precorrin-2 + NAD(+) = sirohydrochlorin + NADH + 2 H(+). It carries out the reaction siroheme + 2 H(+) = sirohydrochlorin + Fe(2+). The protein operates within cofactor biosynthesis; adenosylcobalamin biosynthesis; precorrin-2 from uroporphyrinogen III: step 1/1. It participates in cofactor biosynthesis; adenosylcobalamin biosynthesis; sirohydrochlorin from precorrin-2: step 1/1. Its pathway is porphyrin-containing compound metabolism; siroheme biosynthesis; precorrin-2 from uroporphyrinogen III: step 1/1. It functions in the pathway porphyrin-containing compound metabolism; siroheme biosynthesis; siroheme from sirohydrochlorin: step 1/1. The protein operates within porphyrin-containing compound metabolism; siroheme biosynthesis; sirohydrochlorin from precorrin-2: step 1/1. Multifunctional enzyme that catalyzes the SAM-dependent methylations of uroporphyrinogen III at position C-2 and C-7 to form precorrin-2 via precorrin-1. Then it catalyzes the NAD-dependent ring dehydrogenation of precorrin-2 to yield sirohydrochlorin. Finally, it catalyzes the ferrochelation of sirohydrochlorin to yield siroheme. The sequence is that of Siroheme synthase 1 from Halorhodospira halophila (strain DSM 244 / SL1) (Ectothiorhodospira halophila (strain DSM 244 / SL1)).